Here is a 946-residue protein sequence, read N- to C-terminus: Bifunctional glutamine synthetase adenylyltransferase/adenylyl-removing enzyme (946 aa).

Positions Met-1–Glu-440 are adenylyl removase. The adenylyl transferase stretch occupies residues Ser-449–Glu-946.

This sequence belongs to the GlnE family. Mg(2+) is required as a cofactor.

The enzyme catalyses [glutamine synthetase]-O(4)-(5'-adenylyl)-L-tyrosine + phosphate = [glutamine synthetase]-L-tyrosine + ADP. It catalyses the reaction [glutamine synthetase]-L-tyrosine + ATP = [glutamine synthetase]-O(4)-(5'-adenylyl)-L-tyrosine + diphosphate. Functionally, involved in the regulation of glutamine synthetase GlnA, a key enzyme in the process to assimilate ammonia. When cellular nitrogen levels are high, the C-terminal adenylyl transferase (AT) inactivates GlnA by covalent transfer of an adenylyl group from ATP to specific tyrosine residue of GlnA, thus reducing its activity. Conversely, when nitrogen levels are low, the N-terminal adenylyl removase (AR) activates GlnA by removing the adenylyl group by phosphorolysis, increasing its activity. The regulatory region of GlnE binds the signal transduction protein PII (GlnB) which indicates the nitrogen status of the cell. This is Bifunctional glutamine synthetase adenylyltransferase/adenylyl-removing enzyme from Escherichia coli O6:H1 (strain CFT073 / ATCC 700928 / UPEC).